The sequence spans 205 residues: Small ribosomal subunit protein uS4c (205 aa).

Residues 16-40 (GKLPSLTNKTSKKRKSPGQPATSFK) form a disordered region. The region spanning 93 to 161 (MRLDNIVHRI…IQKNIESKEL (69 aa)) is the S4 RNA-binding domain.

The protein belongs to the universal ribosomal protein uS4 family. Part of the 30S ribosomal subunit. Contacts protein S5. The interaction surface between S4 and S5 is involved in control of translational fidelity.

It is found in the plastid. Its subcellular location is the chloroplast. Functionally, one of the primary rRNA binding proteins, it binds directly to 16S rRNA where it nucleates assembly of the body of the 30S subunit. With S5 and S12 plays an important role in translational accuracy. This Euglena gracilis protein is Small ribosomal subunit protein uS4c (rps4).